Reading from the N-terminus, the 123-residue chain is Small ribosomal subunit protein uS12cz/uS12cy (123 aa).

It belongs to the universal ribosomal protein uS12 family. In terms of assembly, part of the 30S ribosomal subunit.

It is found in the plastid. The protein resides in the chloroplast. Its function is as follows. With S4 and S5 plays an important role in translational accuracy. Located at the interface of the 30S and 50S subunits. The chain is Small ribosomal subunit protein uS12cz/uS12cy (rps12-A) from Phaseolus vulgaris (Kidney bean).